The following is a 276-amino-acid chain: Tryptophan synthase alpha chain (276 aa).

Catalysis depends on proton acceptor residues glutamate 49 and aspartate 60.

This sequence belongs to the TrpA family. Tetramer of two alpha and two beta chains.

The enzyme catalyses (1S,2R)-1-C-(indol-3-yl)glycerol 3-phosphate + L-serine = D-glyceraldehyde 3-phosphate + L-tryptophan + H2O. The protein operates within amino-acid biosynthesis; L-tryptophan biosynthesis; L-tryptophan from chorismate: step 5/5. In terms of biological role, the alpha subunit is responsible for the aldol cleavage of indoleglycerol phosphate to indole and glyceraldehyde 3-phosphate. The chain is Tryptophan synthase alpha chain from Acidiphilium cryptum (strain JF-5).